A 293-amino-acid polypeptide reads, in one-letter code: Ribosomal protein L11 methyltransferase (293 aa).

Residues Thr-145, Gly-166, Asp-188, and Asn-230 each coordinate S-adenosyl-L-methionine.

It belongs to the methyltransferase superfamily. PrmA family.

The protein localises to the cytoplasm. It carries out the reaction L-lysyl-[protein] + 3 S-adenosyl-L-methionine = N(6),N(6),N(6)-trimethyl-L-lysyl-[protein] + 3 S-adenosyl-L-homocysteine + 3 H(+). Functionally, methylates ribosomal protein L11. This Salmonella dublin (strain CT_02021853) protein is Ribosomal protein L11 methyltransferase.